A 380-amino-acid chain; its full sequence is Succinyl-diaminopimelate desuccinylase (380 aa).

Residue His-66 coordinates Zn(2+). The active site involves Asp-68. Asp-99 contributes to the Zn(2+) binding site. Catalysis depends on Glu-135, which acts as the Proton acceptor. Positions 136, 164, and 350 each coordinate Zn(2+).

It belongs to the peptidase M20A family. DapE subfamily. In terms of assembly, homodimer. Zn(2+) serves as cofactor. Co(2+) is required as a cofactor.

It catalyses the reaction N-succinyl-(2S,6S)-2,6-diaminopimelate + H2O = (2S,6S)-2,6-diaminopimelate + succinate. Its pathway is amino-acid biosynthesis; L-lysine biosynthesis via DAP pathway; LL-2,6-diaminopimelate from (S)-tetrahydrodipicolinate (succinylase route): step 3/3. Its function is as follows. Catalyzes the hydrolysis of N-succinyl-L,L-diaminopimelic acid (SDAP), forming succinate and LL-2,6-diaminopimelate (DAP), an intermediate involved in the bacterial biosynthesis of lysine and meso-diaminopimelic acid, an essential component of bacterial cell walls. This Magnetococcus marinus (strain ATCC BAA-1437 / JCM 17883 / MC-1) protein is Succinyl-diaminopimelate desuccinylase.